The sequence spans 68 residues: Medusin-DA1 (68 aa).

The signal sequence occupies residues 1-22 (MAFLKKSLFLVLFLGLVSLSVC). A propeptide spanning residues 23 to 48 (EEEKRENEEEKNEQEEDDREERNEEK) is cleaved from the precursor. The tract at residues 25–47 (EKRENEEEKNEQEEDDREERNEE) is disordered. Residues 31 to 41 (EEKNEQEEDDR) are compositionally biased toward acidic residues. Leucine 67 bears the Leucine amide mark.

It belongs to the frog skin active peptide (FSAP) family. Medusin subfamily. Expressed by the skin glands.

It is found in the secreted. Antimicrobial peptide with activity against Gram-positive bacteria (S.aureus, MIC=32 mg/L) and fungi (C.albicans, MIC=64 mg/L). Shows weak hemolytic activity. The chain is Medusin-DA1 from Agalychnis dacnicolor (Giant Mexican leaf frog).